The following is a 163-amino-acid chain: Neurotrophin-3 (163 aa).

Positions 1–3 (IQS) are cleaved as a signal peptide. The propeptide occupies 4–119 (TSMDQGILTE…VLNRTSRRKR (116 aa)). A glycan (N-linked (GlcNAc...) asparagine) is linked at asparagine 112. A disordered region spans residues 113 to 133 (RTSRRKREGKSHRGEYSVCDS). Basic and acidic residues predominate over residues 123 to 133 (SHRGEYSVCDS).

The protein belongs to the NGF-beta family.

The protein localises to the secreted. Functionally, seems to promote the survival of visceral and proprioceptive sensory neurons. In Charina bottae (Northern rubber boa), this protein is Neurotrophin-3 (NTF3).